A 122-amino-acid polypeptide reads, in one-letter code: UPF0102 protein CLL_A1253 (122 aa).

It belongs to the UPF0102 family.

The sequence is that of UPF0102 protein CLL_A1253 from Clostridium botulinum (strain Eklund 17B / Type B).